The primary structure comprises 186 residues: Thiol:disulfide interchange protein CycY (186 aa).

A signal peptide spans 1-20 (MGRYTLALLPLIVFGGIAHG). Positions 47 to 182 (DAEPAAARRA…LVPAMEKALG (136 aa)) constitute a Thioredoxin domain. Residues Cys80 and Cys83 are joined by a disulfide bond.

It belongs to the thioredoxin family. DsbE subfamily.

The protein localises to the periplasm. Required for disulfide bond formation in some periplasmic proteins. Also acts as a disulfide oxidoreductase in cytochromes c biogenesis. The cysteines of apocytochromes c must be in the reduced state for covalent linkage between the two moieties to occur. The sequence is that of Thiol:disulfide interchange protein CycY (cycY) from Rhizobium leguminosarum bv. viciae.